Here is a 449-residue protein sequence, read N- to C-terminus: MFS-type transporter hasB (449 aa).

The next 12 membrane-spanning stretches (helical) occupy residues 44-64, 80-100, 112-132, 135-155, 168-188, 195-215, 255-275, 296-316, 322-342, 346-366, 387-407, and 415-435; these read VAGS…CGIF, ALAW…PAVG, LPPF…CTKY, VMLA…LPAM, LAVG…PCML, VGFA…LFIA, LPWG…FAPL, AIAN…SDII, MCIV…PLEF, LAGI…FVSL, GGFC…EGAI, and FTGL…CTGT.

This sequence belongs to the major facilitator superfamily. Monocarboxylate porter (TC 2.A.1.13) family.

The protein resides in the membrane. Its function is as follows. MFS-type transporter; part of the gene cluster that mediates the biosynthesis of hexadehydro-astechrome (HAS), a tryptophan-derived iron(III)-complex that acts as a virulence factor in infected mice. Required for the production of HAS. This is MFS-type transporter hasB from Aspergillus fumigatus (strain CBS 144.89 / FGSC A1163 / CEA10) (Neosartorya fumigata).